A 325-amino-acid polypeptide reads, in one-letter code: MSVSAQSVPTTIACLLGPTASGKTAAALALAARRPIEIVSVDSALVYRDMDIGTAKPTREERARVPHHLIDIIDPADAYSAASFRADTLRLIGEIVARGNTPLLAGGTMLYYKALTQGLNDLPTADPAVRAELDAEAARDGWPALHARLAQIDPATAARLAPNDAQRIQRALEVFMLSGQPMSALLAAPRPADEAAAAYRFVPVALEPSDRAVLHARIAQRFDAMLAAGFIDEVERLRRRDDLHLGLPSMRCVGYRQAWEFLDGDIDYRTMRDKGIFATRQLCKRQITWLRAMPERIVVDCIAPDSTARALDALERVLDGRIAAG.

Gly-17–Thr-24 lines the ATP pocket. Thr-19–Thr-24 lines the substrate pocket. Interaction with substrate tRNA stretches follow at residues Asp-42 to Leu-45, Gln-166 to Arg-170, Arg-251 to Arg-256, and Lys-284 to Arg-291.

The protein belongs to the IPP transferase family. Monomer. It depends on Mg(2+) as a cofactor.

It carries out the reaction adenosine(37) in tRNA + dimethylallyl diphosphate = N(6)-dimethylallyladenosine(37) in tRNA + diphosphate. Its function is as follows. Catalyzes the transfer of a dimethylallyl group onto the adenine at position 37 in tRNAs that read codons beginning with uridine, leading to the formation of N6-(dimethylallyl)adenosine (i(6)A). This is tRNA dimethylallyltransferase from Burkholderia multivorans (strain ATCC 17616 / 249).